Reading from the N-terminus, the 443-residue chain is FLYWCH-type zinc finger-containing protein peb-1 (443 aa).

The segment at 22-49 (KPGSSDISSSSTDTSAISPISVSSMPLS) is disordered. Over residues 25–42 (SSDISSSSTDTSAISPIS) the composition is skewed to low complexity. A DNA-binding region (required for DNA-binding) is located at residues 46 to 203 (MPLSPDKEKK…RNKDGKPKKP (158 aa)). The FLYWCH-type zinc-finger motif lies at 69–135 (IVTSFKGYQK…NACTKGSHNH (67 aa)). Residues 251–271 (PTIQIPQPIPTPIQHQQQEQS) are disordered.

Its subcellular location is the nucleus. In terms of biological role, putative transcription factor. Binds to specific sequence motif 5'-[TC][AGT]TGCC[GA][AT]-3' in regulatory elements of target genes such as myosin myo-2. May modulate gene expression, perhaps acting in opposition to transcription factor pha-4. Involved in morphogenesis, perhaps especially in formation of the pharynx. Plays roles in molting, feeding and morphology. This chain is FLYWCH-type zinc finger-containing protein peb-1, found in Caenorhabditis elegans.